We begin with the raw amino-acid sequence, 103 residues long: Probable protease inhibitor Egf0.4a (103 aa).

Positions 1-22 (MMSEKFALVLLVACIAFIGIET) are cleaved as a signal peptide. The region spanning 35 to 87 (CGENEAYDSMRRGCEKRCDDHNPTFCFKFTTVCWCEKGYVRDKSDTCIKVEDC) is the TIL domain.

The protein belongs to the polydnaviridae EGF-like motif protein family.

The protein is Probable protease inhibitor Egf0.4a (O4) of Microplitis demolitor (Parasitoid wasp).